We begin with the raw amino-acid sequence, 380 residues long: Succinyl-diaminopimelate desuccinylase (380 aa).

His-69 contributes to the Zn(2+) binding site. Residue Asp-71 is part of the active site. Asp-102 contributes to the Zn(2+) binding site. Residue Glu-135 is the Proton acceptor of the active site. Zn(2+)-binding residues include Glu-136, Glu-164, and His-353.

This sequence belongs to the peptidase M20A family. DapE subfamily. As to quaternary structure, homodimer. It depends on Zn(2+) as a cofactor. The cofactor is Co(2+).

It catalyses the reaction N-succinyl-(2S,6S)-2,6-diaminopimelate + H2O = (2S,6S)-2,6-diaminopimelate + succinate. The protein operates within amino-acid biosynthesis; L-lysine biosynthesis via DAP pathway; LL-2,6-diaminopimelate from (S)-tetrahydrodipicolinate (succinylase route): step 3/3. Functionally, catalyzes the hydrolysis of N-succinyl-L,L-diaminopimelic acid (SDAP), forming succinate and LL-2,6-diaminopimelate (DAP), an intermediate involved in the bacterial biosynthesis of lysine and meso-diaminopimelic acid, an essential component of bacterial cell walls. This Phenylobacterium zucineum (strain HLK1) protein is Succinyl-diaminopimelate desuccinylase.